The sequence spans 208 residues: Probable adenylyl-sulfate kinase (208 aa).

38-45 (GLSGSGKS) serves as a coordination point for ATP. S112 serves as the catalytic Phosphoserine intermediate.

The protein belongs to the APS kinase family.

It carries out the reaction adenosine 5'-phosphosulfate + ATP = 3'-phosphoadenylyl sulfate + ADP + H(+). It participates in sulfur metabolism; hydrogen sulfide biosynthesis; sulfite from sulfate: step 2/3. Its function is as follows. Catalyzes the synthesis of activated sulfate. The protein is Probable adenylyl-sulfate kinase of Halalkalibacterium halodurans (strain ATCC BAA-125 / DSM 18197 / FERM 7344 / JCM 9153 / C-125) (Bacillus halodurans).